Consider the following 159-residue polypeptide: Intron-encoded endonuclease ai4 (159 aa).

Belongs to the LAGLIDADG endonuclease family.

The protein localises to the mitochondrion. In terms of biological role, mitochondrial DNA endonuclease involved in intron homing. The sequence is that of Intron-encoded endonuclease ai4 (ai4) from Dictyostelium discoideum (Social amoeba).